The chain runs to 371 residues: Riboflavin biosynthesis protein RibD (371 aa).

A CMP/dCMP-type deaminase domain is found at 1 to 122; it reads MEEYYMNTAI…MLEEAGIEVK (122 aa). Residues 1-144 form a deaminase region; sequence MEEYYMNTAI…KMFLHFMRTG (144 aa). Histidine 49 serves as a coordination point for Zn(2+). Glutamate 51 serves as the catalytic Proton donor. Residues cysteine 74 and cysteine 83 each coordinate Zn(2+). Residues 145 to 371 are reductase; the sequence is LPYVTLKAAA…KDGDDVYRNR (227 aa). An NADP(+)-binding site is contributed by alanine 153. Serine 167 provides a ligand contact to substrate. Tryptophan 169 contributes to the NADP(+) binding site. Arginine 183 lines the substrate pocket. NADP(+) contacts are provided by threonine 195 and aspartate 199. Residues leucine 203 and arginine 206 each contribute to the substrate site. Threonine 221 serves as a coordination point for NADP(+). Residue glutamate 290 coordinates substrate. 292–298 contacts NADP(+); sequence GASVHGS.

It in the N-terminal section; belongs to the cytidine and deoxycytidylate deaminase family. In the C-terminal section; belongs to the HTP reductase family. Requires Zn(2+) as cofactor.

It catalyses the reaction 2,5-diamino-6-hydroxy-4-(5-phosphoribosylamino)-pyrimidine + H2O + H(+) = 5-amino-6-(5-phospho-D-ribosylamino)uracil + NH4(+). The enzyme catalyses 5-amino-6-(5-phospho-D-ribitylamino)uracil + NADP(+) = 5-amino-6-(5-phospho-D-ribosylamino)uracil + NADPH + H(+). It participates in cofactor biosynthesis; riboflavin biosynthesis; 5-amino-6-(D-ribitylamino)uracil from GTP: step 2/4. The protein operates within cofactor biosynthesis; riboflavin biosynthesis; 5-amino-6-(D-ribitylamino)uracil from GTP: step 3/4. In terms of biological role, converts 2,5-diamino-6-(ribosylamino)-4(3h)-pyrimidinone 5'-phosphate into 5-amino-6-(ribosylamino)-2,4(1h,3h)-pyrimidinedione 5'-phosphate. In Bacillus amyloliquefaciens (Bacillus velezensis), this protein is Riboflavin biosynthesis protein RibD (ribD).